The chain runs to 476 residues: ATP synthase subunit beta, chloroplastic (476 aa).

153–160 (GGAGVGKT) contributes to the ATP binding site.

The protein belongs to the ATPase alpha/beta chains family. In terms of assembly, F-type ATPases have 2 components, CF(1) - the catalytic core - and CF(0) - the membrane proton channel. CF(1) has five subunits: alpha(3), beta(3), gamma(1), delta(1), epsilon(1). CF(0) has four main subunits: a(1), b(1), b'(1) and c(9-12).

It localises to the plastid. The protein localises to the chloroplast thylakoid membrane. It carries out the reaction ATP + H2O + 4 H(+)(in) = ADP + phosphate + 5 H(+)(out). In terms of biological role, produces ATP from ADP in the presence of a proton gradient across the membrane. The catalytic sites are hosted primarily by the beta subunits. This Dicksonia antarctica (Australian tree fern) protein is ATP synthase subunit beta, chloroplastic.